Here is a 375-residue protein sequence, read N- to C-terminus: Glutamate 5-kinase (375 aa).

Residue K3 participates in ATP binding. 3 residues coordinate substrate: S44, D131, and N143. Residues 163 to 164 (SD) and 205 to 211 (TGGMVTK) each bind ATP. Positions 269-346 (EGTLWVDDGA…GDIEALLGYR (78 aa)) constitute a PUA domain.

The protein belongs to the glutamate 5-kinase family.

The protein localises to the cytoplasm. It carries out the reaction L-glutamate + ATP = L-glutamyl 5-phosphate + ADP. Its pathway is amino-acid biosynthesis; L-proline biosynthesis; L-glutamate 5-semialdehyde from L-glutamate: step 1/2. Catalyzes the transfer of a phosphate group to glutamate to form L-glutamate 5-phosphate. The chain is Glutamate 5-kinase from Rhodospirillum rubrum (strain ATCC 11170 / ATH 1.1.1 / DSM 467 / LMG 4362 / NCIMB 8255 / S1).